Here is a 284-residue protein sequence, read N- to C-terminus: GTP cyclohydrolase MptA (284 aa).

It belongs to the GTP cyclohydrolase IV family. In terms of assembly, homodimer. Requires Fe(2+) as cofactor.

The enzyme catalyses GTP + H2O = 7,8-dihydroneopterin 2',3'-cyclic phosphate + formate + diphosphate + H(+). Its pathway is cofactor biosynthesis; 5,6,7,8-tetrahydromethanopterin biosynthesis. Its function is as follows. Converts GTP to 7,8-dihydro-D-neopterin 2',3'-cyclic phosphate, the first intermediate in the biosynthesis of coenzyme methanopterin. In Thermoplasma volcanium (strain ATCC 51530 / DSM 4299 / JCM 9571 / NBRC 15438 / GSS1), this protein is GTP cyclohydrolase MptA.